The chain runs to 258 residues: Phosphate import ATP-binding protein PstB 2 (258 aa).

Positions isoleucine 12–isoleucine 253 constitute an ABC transporter domain. Glycine 44–serine 51 contacts ATP.

The protein belongs to the ABC transporter superfamily. Phosphate importer (TC 3.A.1.7) family. As to quaternary structure, the complex is composed of two ATP-binding proteins (PstB), two transmembrane proteins (PstC and PstA) and a solute-binding protein (PstS).

It is found in the cell inner membrane. It catalyses the reaction phosphate(out) + ATP + H2O = ADP + 2 phosphate(in) + H(+). Its function is as follows. Part of the ABC transporter complex PstSACB involved in phosphate import. Responsible for energy coupling to the transport system. In Yersinia pestis bv. Antiqua (strain Nepal516), this protein is Phosphate import ATP-binding protein PstB 2.